A 746-amino-acid chain; its full sequence is Polyribonucleotide nucleotidyltransferase (746 aa).

Asp-520 and Asp-526 together coordinate Mg(2+). One can recognise a KH domain in the interval 586–648; sequence PRIITVKVPV…EAARAAVNAI (63 aa). An S1 motif domain is found at 657–729; the sequence is GERYLGTVVK…PRGKLSLVPV (73 aa).

Belongs to the polyribonucleotide nucleotidyltransferase family. The cofactor is Mg(2+).

The protein localises to the cytoplasm. The enzyme catalyses RNA(n+1) + phosphate = RNA(n) + a ribonucleoside 5'-diphosphate. Involved in mRNA degradation. Catalyzes the phosphorolysis of single-stranded polyribonucleotides processively in the 3'- to 5'-direction. The chain is Polyribonucleotide nucleotidyltransferase from Kineococcus radiotolerans (strain ATCC BAA-149 / DSM 14245 / SRS30216).